Reading from the N-terminus, the 274-residue chain is NAD kinase (274 aa).

The active-site Proton acceptor is the Asp-60. NAD(+)-binding positions include 60–61, Lys-65, 127–128, and Arg-152; these read DG and NE.

It belongs to the NAD kinase family. A divalent metal cation is required as a cofactor.

The protein resides in the cytoplasm. It carries out the reaction NAD(+) + ATP = ADP + NADP(+) + H(+). Its function is as follows. Involved in the regulation of the intracellular balance of NAD and NADP, and is a key enzyme in the biosynthesis of NADP. Catalyzes specifically the phosphorylation on 2'-hydroxyl of the adenosine moiety of NAD to yield NADP. This is NAD kinase from Mycoplasmoides gallisepticum (strain R(low / passage 15 / clone 2)) (Mycoplasma gallisepticum).